A 601-amino-acid chain; its full sequence is Glutathione-regulated potassium-efflux system protein KefB (601 aa).

The next 13 helical transmembrane spans lie at serine 4–alanine 24, isoleucine 29–phenylalanine 49, glutamate 55–leucine 75, isoleucine 87–methionine 107, alanine 115–methionine 135, valine 152–glycine 172, histidine 177–glycine 197, phenylalanine 207–glycine 227, leucine 230–leucine 250, glycine 268–tyrosine 288, leucine 291–leucine 311, methionine 324–alanine 344, and alanine 356–valine 376. The region spanning lysine 400–threonine 519 is the RCK N-terminal domain.

The protein belongs to the monovalent cation:proton antiporter 2 (CPA2) transporter (TC 2.A.37) family. KefB subfamily. In terms of assembly, interacts with the regulatory subunit KefG.

The protein localises to the cell inner membrane. With respect to regulation, activated by adducts between glutathione and electrophiles. In terms of biological role, pore-forming subunit of a potassium efflux system that confers protection against electrophiles. Catalyzes K(+)/H(+) antiport. The chain is Glutathione-regulated potassium-efflux system protein KefB from Escherichia coli (strain K12).